The chain runs to 81 residues: Sec-independent protein translocase protein TatA (81 aa).

A helical transmembrane segment spans residues 1 to 21 (MGGISIWQLLIVALIVILLFG). A disordered region spans residues 34-81 (GAVKGFKNAMTPEDENKSLDDKEKDQTAATSQQAAEKQPETESKDKQA). Basic and acidic residues-rich tracts occupy residues 47-59 (DENKSLDDKEKDQ) and 70-81 (KQPETESKDKQA).

Belongs to the TatA/E family. As to quaternary structure, the Tat system comprises two distinct complexes: a TatABC complex, containing multiple copies of TatA, TatB and TatC subunits, and a separate TatA complex, containing only TatA subunits. Substrates initially bind to the TatABC complex, which probably triggers association of the separate TatA complex to form the active translocon.

It localises to the cell inner membrane. Part of the twin-arginine translocation (Tat) system that transports large folded proteins containing a characteristic twin-arginine motif in their signal peptide across membranes. TatA could form the protein-conducting channel of the Tat system. The chain is Sec-independent protein translocase protein TatA from Shewanella frigidimarina (strain NCIMB 400).